The sequence spans 317 residues: Beta-ketoacyl-[acyl-carrier-protein] synthase III (317 aa).

Residues C112 and H244 contribute to the active site. Residues 245–249 (QANLR) form an ACP-binding region. The active site involves N274.

Belongs to the thiolase-like superfamily. FabH family. As to quaternary structure, homodimer.

The protein localises to the cytoplasm. It catalyses the reaction malonyl-[ACP] + acetyl-CoA + H(+) = 3-oxobutanoyl-[ACP] + CO2 + CoA. The protein operates within lipid metabolism; fatty acid biosynthesis. Its function is as follows. Catalyzes the condensation reaction of fatty acid synthesis by the addition to an acyl acceptor of two carbons from malonyl-ACP. Catalyzes the first condensation reaction which initiates fatty acid synthesis and may therefore play a role in governing the total rate of fatty acid production. Possesses both acetoacetyl-ACP synthase and acetyl transacylase activities. Its substrate specificity determines the biosynthesis of branched-chain and/or straight-chain of fatty acids. The sequence is that of Beta-ketoacyl-[acyl-carrier-protein] synthase III from Salmonella typhimurium (strain LT2 / SGSC1412 / ATCC 700720).